Consider the following 226-residue polypeptide: Glutathione peroxidase 3 (226 aa).

A signal peptide spans 1–24; sequence MARLLQASCLLSLLLAGFLPQSRG. Residue Sec73 is part of the active site. Residue Sec73 is a non-standard amino acid, selenocysteine.

This sequence belongs to the glutathione peroxidase family. In terms of assembly, homotetramer. Secreted in plasma.

It localises to the secreted. The catalysed reaction is 2 glutathione + H2O2 = glutathione disulfide + 2 H2O. It carries out the reaction tert-butyl hydroperoxide + 2 glutathione = tert-butanol + glutathione disulfide + H2O. Functionally, protects cells and enzymes from oxidative damage, by catalyzing the reduction of hydrogen peroxide, lipid peroxides and organic hydroperoxide, by glutathione. The protein is Glutathione peroxidase 3 of Sapajus apella (Brown-capped capuchin).